The following is a 765-amino-acid chain: Leucine-rich repeat and calponin homology domain-containing protein 2 (765 aa).

Disordered regions lie at residues 1–39 (MAAS…GGGG) and 55–76 (LFGQ…PQHT). 9 LRR repeats span residues 89 to 110 (SSGI…GYDL), 112 to 133 (DTTQ…VWLF), 135 to 156 (PLET…IKNL), 158 to 179 (MLTY…LFDL), 180 to 201 (PLKV…IGKL), 203 to 224 (DLME…MGKL), 226 to 248 (SLRE…GDLP), 249 to 269 (LVKL…YRKL), and 271 to 292 (HLQV…ICLK). The tract at residues 316–401 (LDLPSLSKRM…GSKTDSQKDQ (86 aa)) is disordered. Residues 378–388 (SNREQTSRNDS) show a composition bias toward basic and acidic residues. Residues 438 to 472 (SEKSRKNEELGDEKRLEKEQLLAEEEDDDLKEVTD) are a coiled coil. 2 disordered regions span residues 498-552 (RNKP…QSEE) and 565-628 (KYKS…EYGA). A compositionally biased stretch (basic and acidic residues) spans 503-512 (QTVECEKSVS). Composition is skewed to polar residues over residues 518–529 (SPLSPLTWQPLE) and 584–595 (DNANMSTQSPVS). The region spanning 642-755 (LREEREQIRQ…VTVQALLELP (114 aa)) is the Calponin-homology (CH) domain.

In terms of biological role, may play a role in the organization of the cytoskeleton. The polypeptide is Leucine-rich repeat and calponin homology domain-containing protein 2 (LRCH2) (Homo sapiens (Human)).